Here is a 707-residue protein sequence, read N- to C-terminus: Choline transporter-like protein 4 (707 aa).

The Cytoplasmic portion of the chain corresponds to 1 to 27; it reads MASEEYGEPAKHDPSFKGPIKKRGCTD. A helical transmembrane segment spans residues 28–48; it reads IICCVLFMVFLLGYMVVGILA. Over 49 to 225 the chain is Extracellular; sequence WLYGDPRQVI…KIFEDFAKSW (177 aa). Asparagine 62, asparagine 140, asparagine 176, asparagine 191, and asparagine 196 each carry an N-linked (GlcNAc...) asparagine glycan. The helical transmembrane segment at 226 to 246 threads the bilayer; sequence PWIITALVIAMVVSLLFLILL. Residues 247 to 249 are Cytoplasmic-facing; the sequence is RFT. Residues 250 to 270 form a helical membrane-spanning segment; that stretch reads AGILVWVLIVGVIGVIGYGIY. Over 271-305 the chain is Extracellular; the sequence is HCYMEYDTLNKQGVSVSDVGFTFNLGVYFRVKETW. A helical membrane pass occupies residues 306–326; that stretch reads LAILIVLAVVEAILLLVLLFL. Over 327 to 354 the chain is Cytoplasmic; it reads RKRILIAIALIKEASKAIGHIMSSLFYP. The helical transmembrane segment at 355–375 threads the bilayer; it reads LVTFVLLVVCVAYWGMTALYL. Topologically, residues 376-442 are extracellular; the sequence is ATSGAPIYRI…TNLFNLQIYN (67 aa). Residues asparagine 389, asparagine 397, and asparagine 401 are each glycosylated (N-linked (GlcNAc...) asparagine). The helical transmembrane segment at 443–463 threads the bilayer; the sequence is VIGFLWCINFVIALGQCVLAG. The Cytoplasmic segment spans residues 464–494; it reads AFASYYWAFHKPKDIPFFPVAESFMRTLRYH. A helical membrane pass occupies residues 495 to 515; the sequence is TGSLAFGSLILTIVQLIRIIL. Over 516-556 the chain is Extracellular; it reads EYVDHKLKGAQNPCTRFLLCCLKCCFWCLEKFIKFLNRNAY. The helical transmembrane segment at 557-577 threads the bilayer; sequence IMIAVYGKNFCVSAKNAFKLL. Topologically, residues 578–593 are cytoplasmic; sequence MRNIVRVVVLDKVTDL. Residues 594-614 traverse the membrane as a helical segment; it reads LIFFGKLIVVGGVGVLAFFFF. The Extracellular segment spans residues 615 to 633; sequence SGRIPIPNDSFKSPTLNYY. Residue asparagine 622 is glycosylated (N-linked (GlcNAc...) asparagine). Residues 634-654 traverse the membrane as a helical segment; sequence WIPIITVVLGSYMIAHGFFSV. Residues 655 to 707 are Cytoplasmic-facing; that stretch reads YNMCVDTLFLCFLEDLERNDGSQEKPYYMSKSLMSILNKKNRPPKSEEKKKKK.

It belongs to the CTL (choline transporter-like) family.

Its subcellular location is the membrane. It localises to the apical cell membrane. The enzyme catalyses choline(out) + n H(+)(in) = choline(in) + n H(+)(out). The catalysed reaction is thiamine diphosphate(out) = thiamine diphosphate(in). Functionally, choline transporter that seems to play a role in the choline-acetylcholine system and is required to the efferent innervation of hair cells in the olivocochlear bundle for the maintenance of physiological function of outer hair cells and the protection of hair cells from acoustic injury. Also described as a thiamine pyrophosphate transporter. Its function is as follows. Also described as a thiamine pyrophosphate transporter. This Xenopus laevis (African clawed frog) protein is Choline transporter-like protein 4 (slc44a4).